Here is a 467-residue protein sequence, read N- to C-terminus: Probable rhamnogalacturonase A (467 aa).

Positions 1–19 (MHSLSLISLALLSPLLVNA) are cleaved as a signal peptide. A disulfide bond links Cys40 and Cys66. Catalysis depends on Asp217, which acts as the Proton donor. Cys219 and Cys236 are oxidised to a cystine. Residues Asn237 and Asn252 are each glycosylated (N-linked (GlcNAc...) asparagine). The active site involves His292. N-linked (GlcNAc...) asparagine glycosylation occurs at Asn319. 2 cysteine pairs are disulfide-bonded: Cys342–Cys348 and Cys370–Cys379.

This sequence belongs to the glycosyl hydrolase 28 family.

Its subcellular location is the secreted. The enzyme catalyses Endohydrolysis of alpha-D-GalA-(1-&gt;2)-alpha-L-Rha glycosidic bond in the rhamnogalacturonan I backbone with initial inversion of anomeric configuration releasing oligosaccharides with beta-D-GalA at the reducing end.. In terms of biological role, pectinolytic enzymes consist of four classes of enzymes: pectine lyase, polygalacturonase, pectin methylesterase and rhamnogalacturonase. Hydrolyzes alpha-D-galacturonopyranosyl-(1,2)-alpha-L-rhamnopyranosyl linkages in the backbone of the hairy regions of pectins. This chain is Probable rhamnogalacturonase A (rhgA), found in Aspergillus oryzae (strain ATCC 42149 / RIB 40) (Yellow koji mold).